Consider the following 434-residue polypeptide: Histidinol dehydrogenase (434 aa).

The substrate site is built by Ser-242, Gln-264, and His-267. Zn(2+) is bound by residues Gln-264 and His-267. Active-site proton acceptor residues include Glu-332 and His-333. The substrate site is built by His-333, Asp-366, Glu-420, and His-425. Asp-366 is a binding site for Zn(2+). His-425 contributes to the Zn(2+) binding site.

Belongs to the histidinol dehydrogenase family. Requires Zn(2+) as cofactor.

The enzyme catalyses L-histidinol + 2 NAD(+) + H2O = L-histidine + 2 NADH + 3 H(+). It participates in amino-acid biosynthesis; L-histidine biosynthesis; L-histidine from 5-phospho-alpha-D-ribose 1-diphosphate: step 9/9. Catalyzes the sequential NAD-dependent oxidations of L-histidinol to L-histidinaldehyde and then to L-histidine. This Desulfotalea psychrophila (strain LSv54 / DSM 12343) protein is Histidinol dehydrogenase.